Here is a 454-residue protein sequence, read N- to C-terminus: Keratin, type I cuticular Ha5 (454 aa).

Positions 1 to 97 are head; it reads MASKCLKASF…FGEGILTGNE (97 aa). The 311-residue stretch at 97–407 folds into the IF rod domain; it reads EKETMQFLND…GLLDSEDCKL (311 aa). The interval 98-125 is coil 1A; sequence KETMQFLNDRLASYLEKCGSWSGRTRSW. The segment at 134–142 is linker 1; the sequence is SNSALPVPD. Residues 143–243 form a coil 1B region; sequence YQSYFQTIEE…HEEEVNSLRC (101 aa). Residues 244 to 259 are linker 12; it reads QLGDRLNVEVDAAPPV. Positions 260 to 403 are coil 2; sequence DLNRVLNEMR…NTYRGLLDSE (144 aa). The tail stretch occupies residues 404–454; it reads DCKLPCNPCAPDHSPSKSCLPCLPAASCGPGMARTTCSPRPICVPCPGSRF.

This sequence belongs to the intermediate filament family.

This chain is Keratin, type I cuticular Ha5, found in Bos taurus (Bovine).